We begin with the raw amino-acid sequence, 748 residues long: Tyrosine--tRNA ligase 2, cytoplasmic (748 aa).

An N-acetylmethionine modification is found at Met-1. Positions 441 to 449 match the 'HIGH' region motif; sequence PSGRMHIAQ. L-tyrosine-binding residues include Tyr-564, Gln-568, Asp-571, and Gln-586. The short motif at 623–627 is the 'KMSKS' region element; that stretch reads KMSKS. Lys-626 is a binding site for ATP.

It belongs to the class-I aminoacyl-tRNA synthetase family.

The protein localises to the cytoplasm. The protein resides in the cytosol. The enzyme catalyses tRNA(Tyr) + L-tyrosine + ATP = L-tyrosyl-tRNA(Tyr) + AMP + diphosphate + H(+). Functionally, catalyzes the attachment of tyrosine to tRNA(Tyr) in a two-step reaction: tyrosine is first activated by ATP to form Tyr-AMP and then transferred to the acceptor end of tRNA(Tyr). The sequence is that of Tyrosine--tRNA ligase 2, cytoplasmic from Arabidopsis thaliana (Mouse-ear cress).